We begin with the raw amino-acid sequence, 869 residues long: Kinesin-like protein KIN-10A (869 aa).

The segment covering Met-1–Pro-36 has biased composition (polar residues). The tract at residues Met-1–Glu-50 is disordered. The segment covering Gly-38–Glu-50 has biased composition (basic and acidic residues). The region spanning Pro-48 to Ile-367 is the Kinesin motor domain. Gly-129–Ser-136 serves as a coordination point for ATP. Positions Arg-393–Asn-515 form a coiled coil.

This sequence belongs to the TRAFAC class myosin-kinesin ATPase superfamily. Kinesin family. KIN-10 subfamily. Binds microtubules.

It localises to the cytoplasm. The protein resides in the cytoskeleton. It is found in the phragmoplast. Its function is as follows. Probable plus end-directed motor protein that may contribute to the transport of Golgi-derived vesicles in the phragmoplast. The sequence is that of Kinesin-like protein KIN-10A from Arabidopsis thaliana (Mouse-ear cress).